Reading from the N-terminus, the 332-residue chain is L-lactate dehydrogenase A chain (332 aa).

Residues 29–57 (GMVG…MEEK) and Arg99 contribute to the NAD(+) site. 3 residues coordinate substrate: Arg106, Asn138, and Arg169. Asn138 contributes to the NAD(+) binding site. The Proton acceptor role is filled by His193. Thr248 is a binding site for substrate.

The protein belongs to the LDH/MDH superfamily. LDH family. In terms of assembly, homotetramer.

It is found in the cytoplasm. It catalyses the reaction (S)-lactate + NAD(+) = pyruvate + NADH + H(+). It functions in the pathway fermentation; pyruvate fermentation to lactate; (S)-lactate from pyruvate: step 1/1. Its function is as follows. Interconverts simultaneously and stereospecifically pyruvate and lactate with concomitant interconversion of NADH and NAD(+). The polypeptide is L-lactate dehydrogenase A chain (ldha) (Lycodichthys dearborni (Antarctic eelpout)).